We begin with the raw amino-acid sequence, 824 residues long: Molybdenum cofactor sulfurase (824 aa).

Lys-274 carries the N6-(pyridoxal phosphate)lysine modification. Residue Cys-433 is part of the active site. In terms of domain architecture, MOSC spans 655–822 (CSSSKYRSCT…LQVGQQVYPS (168 aa)).

This sequence belongs to the class-V pyridoxal-phosphate-dependent aminotransferase family. MOCOS subfamily. Pyridoxal 5'-phosphate is required as a cofactor.

It catalyses the reaction Mo-molybdopterin + L-cysteine + AH2 = thio-Mo-molybdopterin + L-alanine + A + H2O. Its pathway is cofactor biosynthesis; molybdopterin biosynthesis. Sulfurates the molybdenum cofactor. Sulfation of molybdenum is essential for xanthine dehydrogenase (XDH) and aldehyde oxidase (ADO) enzymes in which molybdenum cofactor is liganded by 1 oxygen and 1 sulfur atom in active form. This is Molybdenum cofactor sulfurase (MCSU3) from Oryza sativa subsp. japonica (Rice).